A 368-amino-acid polypeptide reads, in one-letter code: Cytoskeleton protein RodZ (368 aa).

At 1-111 the chain is on the cytoplasmic side; it reads MNTEASQDQT…LGKKHKKRDG (111 aa). Residues 19 to 79 enclose the HTH cro/C1-type domain; the sequence is LRQARESLGL…KLVHLPEDEL (61 aa). Residues 30–49 constitute a DNA-binding region (H-T-H motif); sequence QQTVAERLCLKVSTIRDIEE. The helical; Signal-anchor for type II membrane protein transmembrane segment at 112-132 threads the bilayer; the sequence is WLMSFTWLIVLVVLGLTGAWW. Residues 133–368 lie on the Periplasmic side of the membrane; the sequence is WQNHQAQQAE…RVARLTVGVE (236 aa). The tract at residues 151–243 is disordered; it reads SAQLSQNGGQ…STEPVDTANT (93 aa). Positions 193 to 221 are enriched in low complexity; it reads STSAVTNSATTSSATTSSVPTTSSVPKTT. The span at 229–243 shows a compositional bias: polar residues; the sequence is VPKTNSTEPVDTANT.

The protein belongs to the RodZ family.

It localises to the cell inner membrane. Its function is as follows. Cytoskeletal protein that is involved in cell-shape control through regulation of the length of the long axis. The protein is Cytoskeleton protein RodZ of Yersinia pseudotuberculosis serotype O:3 (strain YPIII).